A 953-amino-acid chain; its full sequence is MSKKRLHEIAKEIGKSSKEVVEHAKYLGLDVKSHASSVEEADAKKIISSFSKASKPDVTASQTVKPKEVAQPSVTVVKETGSEHVEKTQVSKPKSRNFKAEREARAKEQAARKQANGSSHRSQERRGGYRQPNNHQTNEQGDKRITHRSQGDTNDKRIDRKASNVSPRHDNHQLVGDRNRSFAKENHKNGRFTNQKKQGRQEPQSKSPKIDFKARAAALKAEQNAEYSRQSETRFRAQQEAKRLAELARQEAKEAALKAQAEEMSHREAALKSIEEAETKLKSSNISAKSTADNRRKKQARPEKNRELTHHSQEGQKKNKKSWNSQNQVRNQKNSNWNKNKKTKKGKNVKNTNTAPKPVTERKFHELPKEFEYTEGMTVAEIAKRIKREPAEIVKKLFMMGVMATQNQSLDGDTIELLMVDYGIEAKAKVEVDDADIERFFEDENYLNPENIVERAPVVTIMGHVDHGKTTLLDTLRNSRVATGEAGGITQHIGAYQIEEAGKKITFLDTPGHAAFTSMRARGASVTDITILIVAADDGVMPQTIEAINHSKAAGVPIIVAINKIDKPGANPERVIAELAEYGIISTAWGGECEFVEISAKFNKNIDELLETVLLVAEVEELKADPTVRAIGTVIEARLDKGKGAIATLLVQQGTLHVQDPIVVGNTFGRVRAMVNDLGRRVKSAEPSTPVSITGLNETPMAGDHFAVYADEKAARAAGEERSKRALLKQRQNTQRVSLDNLFDTLKAGEIKTVNVIIKADVQGSVEALAASLVKIEVEGVRVNVVHSAVGAINESDVTLAEASNAVIIGFNVRPTPQARQQADTDDVEIRLHSIIYKVIEEVEEAMKGKLDPVYQEKVLGEAIIRETFKVSKVGTIGGFMVINGKVTRDSSVRVIRDSVVIFDGKLASLKHYKDDVKEVGNAQEGGLMIENFNDLKVDDTIEAYIMEEIVRK.

Disordered regions lie at residues 52-241 and 279-363; these read KASK…QQEA and TKLK…TERK. 3 stretches are compositionally biased toward basic and acidic residues: residues 80 to 89, 98 to 111, and 140 to 188; these read TGSEHVEKTQ, FKAE…EQAA, and QGDK…ENHK. Polar residues predominate over residues 191–207; it reads RFTNQKKQGRQEPQSKS. A compositionally biased stretch (basic and acidic residues) spans 229-241; sequence RQSETRFRAQQEA. Residues 282-291 show a composition bias toward polar residues; that stretch reads KSSNISAKST. Basic and acidic residues predominate over residues 300 to 317; it reads ARPEKNRELTHHSQEGQK. Low complexity predominate over residues 322-338; the sequence is SWNSQNQVRNQKNSNWN. Basic residues predominate over residues 339–348; that stretch reads KNKKTKKGKN. The tr-type G domain occupies 454-623; that stretch reads ERAPVVTIMG…LLVAEVEELK (170 aa). The G1 stretch occupies residues 463-470; it reads GHVDHGKT. 463 to 470 serves as a coordination point for GTP; the sequence is GHVDHGKT. Positions 488–492 are G2; the sequence is GITQH. Positions 509 to 512 are G3; the sequence is DTPG. GTP contacts are provided by residues 509 to 513 and 563 to 566; these read DTPGH and NKID. A G4 region spans residues 563–566; that stretch reads NKID. A G5 region spans residues 599 to 601; it reads SAK.

This sequence belongs to the TRAFAC class translation factor GTPase superfamily. Classic translation factor GTPase family. IF-2 subfamily.

It is found in the cytoplasm. Functionally, one of the essential components for the initiation of protein synthesis. Protects formylmethionyl-tRNA from spontaneous hydrolysis and promotes its binding to the 30S ribosomal subunits. Also involved in the hydrolysis of GTP during the formation of the 70S ribosomal complex. This chain is Translation initiation factor IF-2, found in Streptococcus pyogenes serotype M4 (strain MGAS10750).